The sequence spans 297 residues: Phosphatidylserine decarboxylase proenzyme (297 aa).

Catalysis depends on charge relay system; for autoendoproteolytic cleavage activity residues D100, H157, and S263. Residue S263 is the Schiff-base intermediate with substrate; via pyruvic acid; for decarboxylase activity of the active site. Residue S263 is modified to Pyruvic acid (Ser); by autocatalysis.

The protein belongs to the phosphatidylserine decarboxylase family. PSD-B subfamily. Prokaryotic type I sub-subfamily. Heterodimer of a large membrane-associated beta subunit and a small pyruvoyl-containing alpha subunit. Pyruvate is required as a cofactor. In terms of processing, is synthesized initially as an inactive proenzyme. Formation of the active enzyme involves a self-maturation process in which the active site pyruvoyl group is generated from an internal serine residue via an autocatalytic post-translational modification. Two non-identical subunits are generated from the proenzyme in this reaction, and the pyruvate is formed at the N-terminus of the alpha chain, which is derived from the carboxyl end of the proenzyme. The autoendoproteolytic cleavage occurs by a canonical serine protease mechanism, in which the side chain hydroxyl group of the serine supplies its oxygen atom to form the C-terminus of the beta chain, while the remainder of the serine residue undergoes an oxidative deamination to produce ammonia and the pyruvoyl prosthetic group on the alpha chain. During this reaction, the Ser that is part of the protease active site of the proenzyme becomes the pyruvoyl prosthetic group, which constitutes an essential element of the active site of the mature decarboxylase.

It is found in the cell membrane. The enzyme catalyses a 1,2-diacyl-sn-glycero-3-phospho-L-serine + H(+) = a 1,2-diacyl-sn-glycero-3-phosphoethanolamine + CO2. The protein operates within phospholipid metabolism; phosphatidylethanolamine biosynthesis; phosphatidylethanolamine from CDP-diacylglycerol: step 2/2. In terms of biological role, catalyzes the formation of phosphatidylethanolamine (PtdEtn) from phosphatidylserine (PtdSer). The sequence is that of Phosphatidylserine decarboxylase proenzyme from Glaesserella parasuis serovar 5 (strain SH0165) (Haemophilus parasuis).